We begin with the raw amino-acid sequence, 25 residues long: Grammistin Pp 3 (25 aa).

It belongs to the grammistin family. Group 3 subfamily. Exists as aggregates of 3-4 molecules. Expressed by the skin glands.

The protein localises to the secreted. In terms of biological role, thanks to its abundant amphiphilic alpha-helices, it may integrate into membrane phospholipids, leading to lysis of the membrane. Has hemolytic activity. Has antibacterial activity with a broad spectrum against various species of bacteria including both Gram-positive and Gram-negative groups. Also has ichthyotoxic activity. The polypeptide is Grammistin Pp 3 (Pogonoperca punctata (Clown grouper)).